Consider the following 468-residue polypeptide: Glutamate--tRNA ligase (468 aa).

The 'HIGH' region signature appears at 9 to 19 (PSPTGYLHVGG). Zn(2+)-binding residues include cysteine 98, cysteine 100, cysteine 125, and aspartate 127. A 'KMSKS' region motif is present at residues 235-239 (KLSKR). Lysine 238 serves as a coordination point for ATP.

The protein belongs to the class-I aminoacyl-tRNA synthetase family. Glutamate--tRNA ligase type 1 subfamily. Monomer. Zn(2+) is required as a cofactor.

It is found in the cytoplasm. It catalyses the reaction tRNA(Glu) + L-glutamate + ATP = L-glutamyl-tRNA(Glu) + AMP + diphosphate. In terms of biological role, catalyzes the attachment of glutamate to tRNA(Glu) in a two-step reaction: glutamate is first activated by ATP to form Glu-AMP and then transferred to the acceptor end of tRNA(Glu). The sequence is that of Glutamate--tRNA ligase from Idiomarina loihiensis (strain ATCC BAA-735 / DSM 15497 / L2-TR).